The following is a 552-amino-acid chain: MAGGDGMLRRLLRLHRTEIAVAIDSAFPLLHALADHDVVPEDKFQETLRLKEKEGCPQAFHALLSWLLTRDSGAILDFWRILFKDYNLERYSRLHSILDGFPKDVDLNQSRKGRKPLAGPKAAVLPPRPPTKRKALEEPRATPPATLASKSVSSPGSHLKTKPPKKPDGNLESQHLPLGNGIQTMAASVQRAVTVASGDVPGTRGAVEGILIQQVFESGRSKKCIQVGGEFYTPNKFEDPSGNLKNKARSGSSLKPVVRAKGAQVTIPGRDEQKVGQQCGVPPLPSLPSEPQVNQKNEDECAVCHDGGELICCDGCPRAFHLACLSPPLQEIPSGLWRCSCCLQGRVQQNLSQPEVSRPPELPAETPILVGLRSASEKTRGPSRELKASSDAAVTYVNLLAPHPAAPLLEPSALCPLLSAGNEGRPGPAPSARCSVCGDGTEVLRCAHCAAAFHWRCHFPTAAARPGTNLRCKSCSADSTPTPGTPGEAVPTSGPRPAPGLAKVGDDSASHDPVLHRDDLESLLNEHSFDGILQWAIQSMSRPLAETPPFSS.

The HSR domain occupies 1–106; that stretch reads MAGGDGMLRR…ILDGFPKDVD (106 aa). 2 short sequence motifs (LXXLL motif) span residues 8-12 and 64-68; these read LRRLL and LSWLL. The interval 109 to 177 is disordered; that stretch reads QSRKGRKPLA…DGNLESQHLP (69 aa). Positions 114–134 match the Nuclear localization signal motif; that stretch reads RKPLAGPKAAVLPPRPPTKRK. One can recognise an SAND domain in the interval 182–282; the sequence is IQTMAASVQR…QKVGQQCGVP (101 aa). The PHD-type 1 zinc-finger motif lies at 298–345; sequence EDECAVCHDGGELICCDGCPRAFHLACLSPPLQEIPSGLWRCSCCLQG. Positions 414–418 match the LXXLL motif 3 motif; that stretch reads LCPLL. The segment at 434–475 adopts a PHD-type 2 zinc-finger fold; sequence CSVCGDGTEVLRCAHCAAAFHWRCHFPTAAARPGTNLRCKSC. Positions 472–514 are disordered; it reads CKSCSADSTPTPGTPGEAVPTSGPRPAPGLAKVGDDSASHDPV. A compositionally biased stretch (basic and acidic residues) spans 504–514; that stretch reads VGDDSASHDPV. Residues 520–524 carry the LXXLL motif 4 motif; the sequence is LESLL.

Homodimer and homotetramer. Interacts with CREBBP. Interacts preferentially with histone H3 that is not methylated at 'Lys-4'. Binds with lower affinity to histone H3 that is monomethylated at 'Lys-4'. Trimethylation of histone H3 at 'Lys-4' or phosphorylation at 'Thr-3' abolish the interaction. Binds with lower affinity to histone H3 that is acetylated at 'Lys-4', or that is acetylated at 'Lys-9' or trimethylated at 'Lys-9'. Binds histone H3 that is dimethylated at 'Arg-2' with very low affinity. Post-translationally, phosphorylated. In terms of tissue distribution, highly expressed in a few cells in the medulla of the thymus (medullary epithelial cells) (at protein level). Expressed in thymic but no peripheral B-cells. In secondary lymphoid organs, expressed in a discrete population of bone marrow-derived toleregenic antigen presenting cells (APCs) called extrathymic AIRE expressing cells (eTAC)(at protein level). Detected at very low levels in thymus, lymph node, liver, brain, ovary, lung, testis, kidney, heart, spleen, bone marrow, skeletal muscle and adrenal gland. Isoforms 1a to 1d predominate, isoforms 2a to 2d are intermediate and isoforms 3a to 3d are expressed at extremely low levels.

It localises to the nucleus. Its subcellular location is the cytoplasm. Functionally, transcription factor playing an essential role to promote self-tolerance in the thymus by regulating the expression of a wide array of self-antigens that have the commonality of being tissue-restricted in their expression pattern in the periphery, called tissue restricted antigens (TRA). Binds to G-doublets in an A/T-rich environment; the preferred motif is a tandem repeat of 5'-. ATTGGTTA-3' combined with a 5'-TTATTA-3' box. Binds to nucleosomes. Binds to chromatin and interacts selectively with histone H3 that is not methylated at 'Lys-4', not phosphorylated at 'Thr-3' and not methylated at 'Arg-2'. Functions as a sensor of histone H3 modifications that are important for the epigenetic regulation of gene expression. Mainly expressed by medullary thymic epithelial cells (mTECs), induces the expression of thousands of tissue-restricted proteins, which are presented on major histocompatibility complex class I (MHC-I) and MHC-II molecules to developing T-cells percolating through the thymic medulla. Also induces self-tolerance through other mechanisms such as the regulation of the mTEC differentiation program. Controls the medullary accumulation of thymic dendritic cells and the development of regulatory T-cell through the regulation of XCL1 expression. Regulates the production of CCR4 and CCR7 ligands in medullary thymic epithelial cells and alters the coordinated maturation and migration of thymocytes. In thimic B-cells, allows the presentation of licensing-dependent endogenous self-anitgen for negative selection. In secondary lymphoid organs, induces functional inactivation of CD4(+) T-cells. Expressed by a distinct bone marrow-derived population, induces self-tolerance through a mechanism that does not require regulatory T-cells and is resitant to innate inflammatory stimuli. The polypeptide is Autoimmune regulator (Aire) (Mus musculus (Mouse)).